The primary structure comprises 143 residues: Interleukin-4 (143 aa).

The N-terminal stretch at 1–19 (MGLSPQLAAVLLCLLVCTG) is a signal peptide. Intrachain disulfides connect Cys-48-Cys-88 and Cys-70-Cys-115. Asn-62 and Asn-91 each carry an N-linked (GlcNAc...) asparagine glycan.

It belongs to the IL-4/IL-13 family.

It is found in the secreted. Functionally, participates in at least several B-cell activation processes as well as of other cell types. It is a costimulator of DNA-synthesis. It induces the expression of class II MHC molecules on resting B-cells. It enhances both secretion and cell surface expression of IgE and IgG1. It also regulates the expression of the low affinity Fc receptor for IgE (CD23) on both lymphocytes and monocytes. Positively regulates IL31RA expression in macrophages. Stimulates autophagy in dendritic cells by interfering with mTORC1 signaling and through the induction of RUFY4. The polypeptide is Interleukin-4 (IL4) (Meriones unguiculatus (Mongolian jird)).